The sequence spans 508 residues: UBX domain-containing protein 4 (508 aa).

Positions 1–200 (MLWFQGAIPA…PTEDLTVRVE (200 aa)) are interaction with UBQLN1. At 1–413 (MLWFQGAIPA…VHSSSGDFWT (413 aa)) the chain is on the cytoplasmic side. The segment at 117 to 199 (GEASLANGSQ…RPTEDLTVRV (83 aa)) is disordered. Positions 122–190 (ANGSQSEGSV…QEPSGCSNQR (69 aa)) are enriched in polar residues. In terms of domain architecture, UBX spans 315–393 (ERSTVARIQF…ELAPSASVVL (79 aa)). An intramembrane segment occupies 414–434 (LLGTVLYPFLAIWRLISNFLF). Residues 435-508 (SNPPPAQTSV…TWNGNSTQQM (74 aa)) lie on the Cytoplasmic side of the membrane. Polar residues predominate over residues 450–459 (ETSNLASSSN). A disordered region spans residues 450–508 (ETSNLASSSNSEKREPVRKRVLEKRGEDFKKEGKIYRLRTQDDGEDENNTWNGNSTQQM). Residues 460 to 491 (SEKREPVRKRVLEKRGEDFKKEGKIYRLRTQD) show a composition bias toward basic and acidic residues. A Phosphothreonine modification is found at Thr489. Residues 498–508 (NTWNGNSTQQM) are compositionally biased toward polar residues.

Directly interacts with VCP. Interacts with UBQLN1. Forms a complex with VCP and UBQLN1.

The protein resides in the endoplasmic reticulum membrane. It localises to the nucleus envelope. Involved in endoplasmic reticulum-associated protein degradation (ERAD). Acts as a platform to recruit both UBQLN1 and VCP to the ER during ERAD. The sequence is that of UBX domain-containing protein 4 (UBXN4) from Bos taurus (Bovine).